The chain runs to 925 residues: Ubp5-interacting protein ftp105 (925 aa).

Low complexity predominate over residues glutamate 650–serine 664. Residues glutamate 650–glutamine 671 are disordered.

It belongs to the hid-1 family. Interacts with ubp5.

The protein localises to the cytoplasm. The protein resides in the golgi apparatus. Functionally, required for the localization of ubp5 to the Golgi apparatus. Involved in detoxification of cadmium ion. This chain is Ubp5-interacting protein ftp105 (ftp105), found in Schizosaccharomyces pombe (strain 972 / ATCC 24843) (Fission yeast).